Consider the following 243-residue polypeptide: Ubiquinone/menaquinone biosynthesis C-methyltransferase UbiE (243 aa).

S-adenosyl-L-methionine-binding positions include Thr69, Asp90, and 116–117 (DA).

Belongs to the class I-like SAM-binding methyltransferase superfamily. MenG/UbiE family.

It catalyses the reaction a 2-demethylmenaquinol + S-adenosyl-L-methionine = a menaquinol + S-adenosyl-L-homocysteine + H(+). The enzyme catalyses a 2-methoxy-6-(all-trans-polyprenyl)benzene-1,4-diol + S-adenosyl-L-methionine = a 5-methoxy-2-methyl-3-(all-trans-polyprenyl)benzene-1,4-diol + S-adenosyl-L-homocysteine + H(+). The protein operates within quinol/quinone metabolism; menaquinone biosynthesis; menaquinol from 1,4-dihydroxy-2-naphthoate: step 2/2. It functions in the pathway cofactor biosynthesis; ubiquinone biosynthesis. Functionally, methyltransferase required for the conversion of demethylmenaquinol (DMKH2) to menaquinol (MKH2) and the conversion of 2-polyprenyl-6-methoxy-1,4-benzoquinol (DDMQH2) to 2-polyprenyl-3-methyl-6-methoxy-1,4-benzoquinol (DMQH2). This chain is Ubiquinone/menaquinone biosynthesis C-methyltransferase UbiE, found in Cupriavidus necator (strain ATCC 17699 / DSM 428 / KCTC 22496 / NCIMB 10442 / H16 / Stanier 337) (Ralstonia eutropha).